The following is a 318-amino-acid chain: Transaldolase (318 aa).

Lysine 132 functions as the Schiff-base intermediate with substrate in the catalytic mechanism.

Belongs to the transaldolase family. Type 1 subfamily. Homodimer.

The protein localises to the cytoplasm. The enzyme catalyses D-sedoheptulose 7-phosphate + D-glyceraldehyde 3-phosphate = D-erythrose 4-phosphate + beta-D-fructose 6-phosphate. The protein operates within carbohydrate degradation; pentose phosphate pathway; D-glyceraldehyde 3-phosphate and beta-D-fructose 6-phosphate from D-ribose 5-phosphate and D-xylulose 5-phosphate (non-oxidative stage): step 2/3. Its function is as follows. Transaldolase is important for the balance of metabolites in the pentose-phosphate pathway. This chain is Transaldolase, found in Shewanella baltica (strain OS195).